A 149-amino-acid chain; its full sequence is uncharacterized protein (149 aa).

Residues 2-146 (LEVKTISVED…NHIVMYKTLR (145 aa)) form the N-acetyltransferase domain.

This sequence belongs to the acetyltransferase family.

This is an uncharacterized protein from Bacillus subtilis (strain 168).